Here is a 99-residue protein sequence, read N- to C-terminus: Integration host factor subunit alpha (99 aa).

Belongs to the bacterial histone-like protein family. As to quaternary structure, heterodimer of an alpha and a beta chain.

Functionally, this protein is one of the two subunits of integration host factor, a specific DNA-binding protein that functions in genetic recombination as well as in transcriptional and translational control. The sequence is that of Integration host factor subunit alpha from Psychrobacter cryohalolentis (strain ATCC BAA-1226 / DSM 17306 / VKM B-2378 / K5).